We begin with the raw amino-acid sequence, 298 residues long: Tryptophan 2,3-dioxygenase (298 aa).

Substrate is bound by residues 51–55, Tyr113, and Arg117; that span reads FIIQH. His240 is a binding site for heme. Residue Thr254 coordinates substrate.

Belongs to the tryptophan 2,3-dioxygenase family. Homotetramer. It depends on heme as a cofactor.

It catalyses the reaction L-tryptophan + O2 = N-formyl-L-kynurenine. It functions in the pathway amino-acid degradation; L-tryptophan degradation via kynurenine pathway; L-kynurenine from L-tryptophan: step 1/2. Functionally, heme-dependent dioxygenase that catalyzes the oxidative cleavage of the L-tryptophan (L-Trp) pyrrole ring and converts L-tryptophan to N-formyl-L-kynurenine. Catalyzes the oxidative cleavage of the indole moiety. This is Tryptophan 2,3-dioxygenase from Xanthomonas euvesicatoria pv. vesicatoria (strain 85-10) (Xanthomonas campestris pv. vesicatoria).